The primary structure comprises 343 residues: Alpha-tocopherol transfer protein-like (343 aa).

Residues 1 to 29 (MSEESDSLRTSPSVASLSENELPLPPPDP) form a disordered region. The span at 8-19 (LRTSPSVASLSE) shows a compositional bias: polar residues. In terms of domain architecture, CRAL-TRIO spans 118-283 (RPSALKDVLN…EYGGTAGELD (166 aa)).

Its function is as follows. May act as a protein that binds a hydrophobic ligand. The polypeptide is Alpha-tocopherol transfer protein-like (Ttpal) (Mus musculus (Mouse)).